Consider the following 214-residue polypeptide: UPF0502 protein Spro_2794 (214 aa).

It belongs to the UPF0502 family.

This is UPF0502 protein Spro_2794 from Serratia proteamaculans (strain 568).